Here is a 185-residue protein sequence, read N- to C-terminus: Peroxynitrite isomerase (185 aa).

The disordered stretch occupies residues 1-21 (MHHPARELPFPDALRPGARPA). Positions 34 to 40 (GTWRGTG) match the GXWXGXG motif. Histidine 171 is a heme b binding site.

The protein belongs to the nitrobindin family. Homodimer. Heme b serves as cofactor.

It carries out the reaction peroxynitrite = nitrate. Its pathway is nitrogen metabolism. Its function is as follows. Heme-binding protein able to scavenge peroxynitrite and to protect free L-tyrosine against peroxynitrite-mediated nitration, by acting as a peroxynitrite isomerase that converts peroxynitrite to nitrate. Therefore, this protein likely plays a role in peroxynitrite sensing and in the detoxification of reactive nitrogen and oxygen species (RNS and ROS, respectively). Is able to bind nitric oxide (NO) in vitro, but may act as a sensor of peroxynitrite levels in vivo. This is Peroxynitrite isomerase from Streptomyces griseus subsp. griseus (strain JCM 4626 / CBS 651.72 / NBRC 13350 / KCC S-0626 / ISP 5235).